The chain runs to 434 residues: Lecithin-cholesterol acyltransferase-like 1 (434 aa).

Ser191 (acyl-ester intermediate) is an active-site residue. Residues Asp354 and His386 each act as charge relay system in the active site.

This sequence belongs to the AB hydrolase superfamily. Lipase family.

This chain is Lecithin-cholesterol acyltransferase-like 1, found in Oryza sativa subsp. japonica (Rice).